Here is a 653-residue protein sequence, read N- to C-terminus: Fusexin 1 (653 aa).

The first 24 residues, 1 to 24 (MKRVGNCWKASVAAFFLLMFTAFA), serve as a signal peptide directing secretion. The Extracellular portion of the chain corresponds to 25 to 559 (AADTTSVDTV…FENIWSGDAN (535 aa)). Disulfide bonds link Cys-129/Cys-167, Cys-398/Cys-441, Cys-468/Cys-487, and Cys-499/Cys-516. Positions 155-160 (DYWTGS) are fusion loop. A helical membrane pass occupies residues 560-580 (ALNWLQVFVTFIAFLGGFALV). At 581 to 604 (GVKLGKIVDGLATEFIPVKDSHVR) the chain is on the cytoplasmic side. Transmembrane regions (helical) follow at residues 605–625 (LVIG…LVTD) and 626–646 (PLGL…YLSA). Residues 647–653 (SAPEINL) lie on the Cytoplasmic side of the membrane.

It belongs to the HAP2/GCS1 family. Fusexin 1 subfamily. Homotrimer stabilized by interdomain contacts and numerous Ca(2+) and Na(+) ions.

The protein localises to the cell surface. The protein resides in the cell membrane. Functionally, exhibits fusogenic activity. Mediates cell-cell fusion in mammalian cells (bilateral fusion). This chain is Fusexin 1, found in Haloplanus natans (strain DSM 17983 / JCM 14081 / CGMCC 1.8972 / RE-101).